A 473-amino-acid chain; its full sequence is Glutathione reductase, mitochondrial (473 aa).

Ser30 and Gly31 together coordinate FAD. Ser30 is a binding site for glutathione. Position 37 (Arg37) interacts with glutathione. 4 residues coordinate FAD: Glu50, Thr57, Cys58, and Lys66. Cys58 and Cys63 are joined by a disulfide. Tyr114 contacts glutathione. Ala130 contacts FAD. NADP(+) is bound by residues Ala190, Ile193, Glu196, Arg213, Arg219, and Gly279. Residue Asp320 coordinates FAD. Leu326 contributes to the NADP(+) binding site. Residue Thr328 participates in FAD binding. Position 336 (Arg336) interacts with glutathione. Val359 is a binding site for NADP(+). Residue His456 coordinates FAD. His456 (proton acceptor) is an active-site residue.

It belongs to the class-I pyridine nucleotide-disulfide oxidoreductase family. Requires FAD as cofactor. In terms of tissue distribution, expressed at all larval stages and in adults in intestine, vulva muscle, pharynx and some cells in the tail.

Its subcellular location is the cytoplasm. The protein resides in the mitochondrion. It catalyses the reaction 2 glutathione + NADP(+) = glutathione disulfide + NADPH + H(+). Functionally, catalyzes the reduction of glutathione disulfide (GSSG) to reduced glutathione (GSH). Constitutes the major mechanism to maintain a high GSH:GSSG ratio in the cytosol. Involved in resistance to oxidative stress and starvation. Together with thioredoxin reductase txtr-1, required for the reduction of disulfide groups in the cuticle during molting. This Caenorhabditis elegans protein is Glutathione reductase, mitochondrial.